The sequence spans 298 residues: MEPVIPEGALSQSTKDFLAGVSGGVAQVLVGQPFDCVKVRLQSQSNVSPIYNNALDCVKKISKNEGLAAFYKGTVLPLLGIGFCVSIQFTTFEYCKRFFSRDGTPVTMPQYYVSGAISGLANSFLVGPVEHVRIRLQIQTGKNVLYHGPWDCIKKISSQYGLSGIMKGYNPTAAREAHGLGMYFLAYEALVKNTMAKHHLTDRSQTPGWKLCVFGAGAGYAMWLAAYPFDIVKSKIQTDGFLSKATYKNSWQCAKGIYTKAGLRGFYRGFVPVLVRAAPANAVTFYVYETVSQHIRHL.

Solcar repeat units follow at residues Thr14–Phe98, Val106–Asn193, and Thr206–His294. 6 helical membrane-spanning segments follow: residues Phe17–Val37, Leu67–Ile87, Tyr112–Val132, Thr172–Lys192, Cys212–Val232, and Phe266–Val287.

It belongs to the mitochondrial carrier (TC 2.A.29) family.

It localises to the mitochondrion inner membrane. In terms of biological role, acts as a glutamate and glycine mitochondrial transmembrane transporter. The chain is Glutamate/glycine mitochondrial carrier ymc1 (ymc1) from Schizosaccharomyces pombe (strain 972 / ATCC 24843) (Fission yeast).